Reading from the N-terminus, the 169-residue chain is MEGHVKRPMNAFMVWSRGERRKLAQQNPSMQNSEISKHLGYQWKSLTEAEKRPFFQEAQRLKTLHREKYPNYKYQPHRRVKVPQRSYTLQREVASTKLYNLLQWDNNLHTIIYGQDWARAAHQSSKNQKSIYLQPVDIPTGYPLQQKQQHQQQQHVHLQQQQQQQHQFH.

The tract at residues 4 to 81 is sufficient for interaction with KPNB1; it reads HVKRPMNAFM…YKYQPHRRVK (78 aa). A DNA-binding region (HMG box) is located at residues 5 to 73; sequence VKRPMNAFMV…LHREKYPNYK (69 aa). Required for nuclear localization regions lie at residues 6–22 and 75–81; these read KRPM…ERRK and QPHRRVK. Residues 52–84 are sufficient for interaction with EP300; it reads RPFFQEAQRLKTLHREKYPNYKYQPHRRVKVPQ. An N6-acetyllysine modification is found at Lys-81. A necessary for interaction with ZNF208 isoform KRAB-O region spans residues 92–144; the sequence is EVASTKLYNLLQWDNNLHTIIYGQDWARAAHQSSKNQKSIYLQPVDIPTGYPL. Residues 94-138 form a necessary for interaction with SLC9A3R2 and nuclear accumulation of SLC9A3R2 region; that stretch reads ASTKLYNLLQWDNNLHTIIYGQDWARAAHQSSKNQKSIYLQPVDI. Positions 144–169 are disordered; the sequence is LQQKQQHQQQQHVHLQQQQQQQHQFH. Positions 145-169 are enriched in low complexity; it reads QQKQQHQQQQHVHLQQQQQQQHQFH.

It belongs to the SRY family. As to quaternary structure, interacts with CALM, EP300, HDAC3, KPNB1, ZNF208 isoform KRAB-O, SLC9A3R2 and WT1. The interaction with EP300 modulates its DNA-binding activity. The interaction with KPNB1 is sensitive to dissociation by Ran in the GTP-bound form. Interacts with PARP1; leading to impair its DNA-binding activity. In terms of processing, acetylation of Lys-81 contributes to its nuclear localization and enhances its interaction with KPNB1. Deacetylated by HDAC3. Expressed in the substantia nigra (at protein level).

The protein resides in the nucleus speckle. It localises to the cytoplasm. The protein localises to the nucleus. Transcriptional regulator that controls a genetic switch in male development. It is necessary and sufficient for initiating male sex determination by directing the development of supporting cell precursors (pre-Sertoli cells) as Sertoli rather than granulosa cells. Involved in different aspects of gene regulation including promoter activation or repression. Binds to the DNA consensus sequence 5'-[AT]AACAA[AT]-3'. SRY HMG box recognizes DNA by partial intercalation in the minor groove and promotes DNA bending. Also involved in pre-mRNA splicing. In male adult brain involved in the maintenance of motor functions of dopaminergic neurons. The polypeptide is Sex-determining region Y protein (Sry) (Rattus norvegicus (Rat)).